Here is an 872-residue protein sequence, read N- to C-terminus: Armadillo repeat-containing protein 3 (872 aa).

12 ARM repeats span residues 15–54, 57–96, 98–138, 140–179, 181–220, 222–262, 264–304, 306–345, 346–385, 388–427, 429–468, and 470–509; these read DVFD…KFAL, EENK…ILAS, NDVK…NMSA, YTSK…NLVQ, FQCR…VIAN, KESR…NCLE, MDTM…KAAY, PENR…AMCE, NSGS…NLTT, PANA…NMAM, EPLR…ATAC, and VEAR…VCAG. Residues Cys507 and Cys518 are each lipidated (S-palmitoyl cysteine). A disordered region spans residues 610–693; sequence VSPPSSMEDK…SKGKKEEEKV (84 aa). A compositionally biased stretch (low complexity) spans 626-635; it reads RSISSSSSLR. Basic residues predominate over residues 636–646; the sequence is RSSKEKNKKNS. Residues 675–693 are compositionally biased toward basic and acidic residues; the sequence is ATKEKGWRKSKGKKEEEKV.

Homodimer. Interacts with PIK3C3, PIK3R4 and BECN1. Interacts (via ARM domains) with ATG14. In terms of processing, palmitoylation is important for its function in autophagy. As to expression, expressed in skeletal muscle, brain, lung, kidney, prostate and testis. Mainly expressed in skeletal muscle, liver, spleen and thymus. In terms of tissue distribution, expressed only in the testis among normal tissues but is expressed frequently in various cancer tissues and, particularly, in pancreatic, lung and endometrial cancers.

In terms of biological role, essential for male fertility and sperm motility. During spermatogenesis, promotes the autophagic degradation of excessive ribosomes, providing energy resources for mitochondria and thus ensuring sperm flagellar motility. This chain is Armadillo repeat-containing protein 3 (ARMC3), found in Homo sapiens (Human).